The following is a 147-amino-acid chain: Ubiquitin-conjugating enzyme E2-17 kDa (147 aa).

In terms of domain architecture, UBC core spans 1–147 (MALKRINKEL…AREWTRKYAM (147 aa)). C85 acts as the Glycyl thioester intermediate in catalysis.

Belongs to the ubiquitin-conjugating enzyme family.

The enzyme catalyses S-ubiquitinyl-[E1 ubiquitin-activating enzyme]-L-cysteine + [E2 ubiquitin-conjugating enzyme]-L-cysteine = [E1 ubiquitin-activating enzyme]-L-cysteine + S-ubiquitinyl-[E2 ubiquitin-conjugating enzyme]-L-cysteine.. It functions in the pathway protein modification; protein ubiquitination. Catalyzes the covalent attachment of ubiquitin to other proteins. Mediates the selective degradation of short-lived and abnormal proteins. Required for proper telomere behavior during cell divisions and possibly for ubiquitination of proteins involved in postmeiotic stages of spermatogenesis. Deletion mutations are lethal in homozygotes. The chain is Ubiquitin-conjugating enzyme E2-17 kDa (eff) from Drosophila melanogaster (Fruit fly).